We begin with the raw amino-acid sequence, 162 residues long: SsrA-binding protein (162 aa).

It belongs to the SmpB family.

It is found in the cytoplasm. Required for rescue of stalled ribosomes mediated by trans-translation. Binds to transfer-messenger RNA (tmRNA), required for stable association of tmRNA with ribosomes. tmRNA and SmpB together mimic tRNA shape, replacing the anticodon stem-loop with SmpB. tmRNA is encoded by the ssrA gene; the 2 termini fold to resemble tRNA(Ala) and it encodes a 'tag peptide', a short internal open reading frame. During trans-translation Ala-aminoacylated tmRNA acts like a tRNA, entering the A-site of stalled ribosomes, displacing the stalled mRNA. The ribosome then switches to translate the ORF on the tmRNA; the nascent peptide is terminated with the 'tag peptide' encoded by the tmRNA and targeted for degradation. The ribosome is freed to recommence translation, which seems to be the essential function of trans-translation. This chain is SsrA-binding protein, found in Shewanella frigidimarina (strain NCIMB 400).